The following is a 272-amino-acid chain: Nitrogenase iron protein (272 aa).

ATP is bound at residue 8 to 15 (GKGGIGKS). Cysteine 94 lines the [4Fe-4S] cluster pocket. Position 97 is an ADP-ribosylarginine; by dinitrogenase reductase ADP-ribosyltransferase (arginine 97). A [4Fe-4S] cluster-binding site is contributed by cysteine 129.

Belongs to the NifH/BchL/ChlL family. As to quaternary structure, homodimer. [4Fe-4S] cluster is required as a cofactor. Post-translationally, the reversible ADP-ribosylation of Arg-97 inactivates the nitrogenase reductase and regulates nitrogenase activity.

The catalysed reaction is N2 + 8 reduced [2Fe-2S]-[ferredoxin] + 16 ATP + 16 H2O = H2 + 8 oxidized [2Fe-2S]-[ferredoxin] + 2 NH4(+) + 16 ADP + 16 phosphate + 6 H(+). In terms of biological role, the key enzymatic reactions in nitrogen fixation are catalyzed by the nitrogenase complex, which has 2 components: the iron protein and the molybdenum-iron protein. The protein is Nitrogenase iron protein of Desulforamulus reducens (strain ATCC BAA-1160 / DSM 100696 / MI-1) (Desulfotomaculum reducens).